The primary structure comprises 264 residues: 4-hydroxy-tetrahydrodipicolinate reductase (264 aa).

NAD(+) is bound at residue 8–13; it reads GPRGNM. An NADP(+)-binding site is contributed by Lys36. Residues 97–99 and 123–126 each bind NAD(+); these read GTT and APNF. His153 acts as the Proton donor/acceptor in catalysis. (S)-2,3,4,5-tetrahydrodipicolinate is bound at residue His154. Residue Lys157 is the Proton donor of the active site. 163–164 is a (S)-2,3,4,5-tetrahydrodipicolinate binding site; it reads GT.

This sequence belongs to the DapB family.

It is found in the cytoplasm. The catalysed reaction is (S)-2,3,4,5-tetrahydrodipicolinate + NAD(+) + H2O = (2S,4S)-4-hydroxy-2,3,4,5-tetrahydrodipicolinate + NADH + H(+). It catalyses the reaction (S)-2,3,4,5-tetrahydrodipicolinate + NADP(+) + H2O = (2S,4S)-4-hydroxy-2,3,4,5-tetrahydrodipicolinate + NADPH + H(+). It participates in amino-acid biosynthesis; L-lysine biosynthesis via DAP pathway; (S)-tetrahydrodipicolinate from L-aspartate: step 4/4. In terms of biological role, catalyzes the conversion of 4-hydroxy-tetrahydrodipicolinate (HTPA) to tetrahydrodipicolinate. In Shouchella clausii (strain KSM-K16) (Alkalihalobacillus clausii), this protein is 4-hydroxy-tetrahydrodipicolinate reductase.